The primary structure comprises 196 residues: Ribosome maturation factor RimP (196 aa).

A compositionally biased stretch (basic residues) spans 131–145; sequence KKKAGKKSQGKKAGK. A disordered region spans residues 131 to 153; that stretch reads KKKAGKKSQGKKAGKKTPQAPVQ.

This sequence belongs to the RimP family.

The protein resides in the cytoplasm. In terms of biological role, required for maturation of 30S ribosomal subunits. In Corynebacterium urealyticum (strain ATCC 43042 / DSM 7109), this protein is Ribosome maturation factor RimP.